A 433-amino-acid polypeptide reads, in one-letter code: Adenosylhomocysteinase B (433 aa).

Residues T57, D132, E157, K187, and D191 each coordinate substrate. Residues S184–A351 form an NAD binding region.

The protein belongs to the adenosylhomocysteinase family. In terms of assembly, homotetramer. It depends on NAD(+) as a cofactor.

Its subcellular location is the cytoplasm. The catalysed reaction is S-adenosyl-L-homocysteine + H2O = L-homocysteine + adenosine. The protein operates within amino-acid biosynthesis; L-homocysteine biosynthesis; L-homocysteine from S-adenosyl-L-homocysteine: step 1/1. Functionally, catalyzes the hydrolysis of S-adenosyl-L-homocysteine to form adenosine and homocysteine. Binds copper ions. The polypeptide is Adenosylhomocysteinase B (ahcy-b) (Xenopus laevis (African clawed frog)).